Consider the following 129-residue polypeptide: Large ribosomal subunit protein uL22 (129 aa).

This sequence belongs to the universal ribosomal protein uL22 family. In terms of assembly, part of the 50S ribosomal subunit.

In terms of biological role, this protein binds specifically to 23S rRNA; its binding is stimulated by other ribosomal proteins, e.g. L4, L17, and L20. It is important during the early stages of 50S assembly. It makes multiple contacts with different domains of the 23S rRNA in the assembled 50S subunit and ribosome. Functionally, the globular domain of the protein is located near the polypeptide exit tunnel on the outside of the subunit, while an extended beta-hairpin is found that lines the wall of the exit tunnel in the center of the 70S ribosome. The sequence is that of Large ribosomal subunit protein uL22 from Brucella abortus (strain 2308).